The sequence spans 415 residues: Serine hydroxymethyltransferase (415 aa).

(6S)-5,6,7,8-tetrahydrofolate is bound by residues Leu117 and 121 to 123; that span reads GHL. Lys226 carries the N6-(pyridoxal phosphate)lysine modification. Glu241 contacts (6S)-5,6,7,8-tetrahydrofolate.

It belongs to the SHMT family. As to quaternary structure, homodimer. Pyridoxal 5'-phosphate is required as a cofactor.

It localises to the cytoplasm. The catalysed reaction is (6R)-5,10-methylene-5,6,7,8-tetrahydrofolate + glycine + H2O = (6S)-5,6,7,8-tetrahydrofolate + L-serine. It functions in the pathway one-carbon metabolism; tetrahydrofolate interconversion. It participates in amino-acid biosynthesis; glycine biosynthesis; glycine from L-serine: step 1/1. In terms of biological role, catalyzes the reversible interconversion of serine and glycine with tetrahydrofolate (THF) serving as the one-carbon carrier. This reaction serves as the major source of one-carbon groups required for the biosynthesis of purines, thymidylate, methionine, and other important biomolecules. Also exhibits THF-independent aldolase activity toward beta-hydroxyamino acids, producing glycine and aldehydes, via a retro-aldol mechanism. This Bacillus velezensis (strain DSM 23117 / BGSC 10A6 / LMG 26770 / FZB42) (Bacillus amyloliquefaciens subsp. plantarum) protein is Serine hydroxymethyltransferase.